A 614-amino-acid polypeptide reads, in one-letter code: uncharacterized protein (614 aa).

2 consecutive transmembrane segments (helical) span residues 494–516 (VAYW…GSTL) and 552–574 (LLIG…IVHA). Residues 588 to 614 (AVRPRADKDIQTLTHRDEAEEDQEEDS) are disordered. The span at 591 to 605 (PRADKDIQTLTHRDE) shows a compositional bias: basic and acidic residues.

It is found in the cell membrane. This is an uncharacterized protein from Treponema pallidum (strain Nichols).